Consider the following 250-residue polypeptide: Phosphonates import ATP-binding protein PhnC (250 aa).

Positions 2–247 constitute an ABC transporter domain; the sequence is ILFNNVNKVW…KLDAQAMKKI (246 aa). Residue 35–42 coordinates ATP; that stretch reads GLSGAGKT.

It belongs to the ABC transporter superfamily. Phosphonates importer (TC 3.A.1.9.1) family. As to quaternary structure, the complex is composed of two ATP-binding proteins (PhnC), two transmembrane proteins (PhnE) and a solute-binding protein (PhnD).

It localises to the cell membrane. The catalysed reaction is phosphonate(out) + ATP + H2O = phosphonate(in) + ADP + phosphate + H(+). Functionally, part of the ABC transporter complex PhnCDE involved in phosphonates import. Responsible for energy coupling to the transport system. The polypeptide is Phosphonates import ATP-binding protein PhnC (Mycoplasma capricolum subsp. capricolum (strain California kid / ATCC 27343 / NCTC 10154)).